Consider the following 353-residue polypeptide: Mannonate dehydratase (353 aa).

Belongs to the mannonate dehydratase family. Fe(2+) serves as cofactor. It depends on Mn(2+) as a cofactor.

It catalyses the reaction D-mannonate = 2-dehydro-3-deoxy-D-gluconate + H2O. Its pathway is carbohydrate metabolism; pentose and glucuronate interconversion. In terms of biological role, catalyzes the dehydration of D-mannonate. This is Mannonate dehydratase from Burkholderia cenocepacia (strain ATCC BAA-245 / DSM 16553 / LMG 16656 / NCTC 13227 / J2315 / CF5610) (Burkholderia cepacia (strain J2315)).